Reading from the N-terminus, the 158-residue chain is Transcription elongation factor GreA (158 aa).

The protein belongs to the GreA/GreB family.

Functionally, necessary for efficient RNA polymerase transcription elongation past template-encoded arresting sites. The arresting sites in DNA have the property of trapping a certain fraction of elongating RNA polymerases that pass through, resulting in locked ternary complexes. Cleavage of the nascent transcript by cleavage factors such as GreA or GreB allows the resumption of elongation from the new 3'terminus. GreA releases sequences of 2 to 3 nucleotides. This is Transcription elongation factor GreA from Psychrobacter arcticus (strain DSM 17307 / VKM B-2377 / 273-4).